Here is a 182-residue protein sequence, read N- to C-terminus: Acireductone dioxygenase (182 aa).

Residues His100, His102, Glu106, and His145 each contribute to the Fe(2+) site. Residues His100, His102, Glu106, and His145 each contribute to the Ni(2+) site.

Belongs to the acireductone dioxygenase (ARD) family. Monomer. Fe(2+) serves as cofactor. It depends on Ni(2+) as a cofactor.

The catalysed reaction is 1,2-dihydroxy-5-(methylsulfanyl)pent-1-en-3-one + O2 = 3-(methylsulfanyl)propanoate + CO + formate + 2 H(+). It carries out the reaction 1,2-dihydroxy-5-(methylsulfanyl)pent-1-en-3-one + O2 = 4-methylsulfanyl-2-oxobutanoate + formate + 2 H(+). Its pathway is amino-acid biosynthesis; L-methionine biosynthesis via salvage pathway; L-methionine from S-methyl-5-thio-alpha-D-ribose 1-phosphate: step 5/6. Its function is as follows. Catalyzes 2 different reactions between oxygen and the acireductone 1,2-dihydroxy-3-keto-5-methylthiopentene (DHK-MTPene) depending upon the metal bound in the active site. Fe-containing acireductone dioxygenase (Fe-ARD) produces formate and 2-keto-4-methylthiobutyrate (KMTB), the alpha-ketoacid precursor of methionine in the methionine recycle pathway. Ni-containing acireductone dioxygenase (Ni-ARD) produces methylthiopropionate, carbon monoxide and formate, and does not lie on the methionine recycle pathway. The sequence is that of Acireductone dioxygenase from Nostoc sp. (strain PCC 7120 / SAG 25.82 / UTEX 2576).